The primary structure comprises 299 residues: Pyridoxal 5'-phosphate synthase subunit PdxS (299 aa).

Asp-29 serves as a coordination point for D-ribose 5-phosphate. Residue Lys-86 is the Schiff-base intermediate with D-ribose 5-phosphate of the active site. Gly-158 lines the D-ribose 5-phosphate pocket. Arg-170 is a D-glyceraldehyde 3-phosphate binding site. D-ribose 5-phosphate contacts are provided by residues Gly-219 and 240–241 (GS).

Belongs to the PdxS/SNZ family. In terms of assembly, in the presence of PdxT, forms a dodecamer of heterodimers.

It carries out the reaction aldehydo-D-ribose 5-phosphate + D-glyceraldehyde 3-phosphate + L-glutamine = pyridoxal 5'-phosphate + L-glutamate + phosphate + 3 H2O + H(+). Its pathway is cofactor biosynthesis; pyridoxal 5'-phosphate biosynthesis. Catalyzes the formation of pyridoxal 5'-phosphate from ribose 5-phosphate (RBP), glyceraldehyde 3-phosphate (G3P) and ammonia. The ammonia is provided by the PdxT subunit. Can also use ribulose 5-phosphate and dihydroxyacetone phosphate as substrates, resulting from enzyme-catalyzed isomerization of RBP and G3P, respectively. The polypeptide is Pyridoxal 5'-phosphate synthase subunit PdxS (Protochlamydia amoebophila (strain UWE25)).